Here is a 655-residue protein sequence, read N- to C-terminus: p-hydroxybenzoic acid efflux pump subunit AaeB (655 aa).

Helical transmembrane passes span 13–33 (FAVK…HFQL), 38–58 (WAVL…GGEP), 69–89 (LRII…IAMI), 93–113 (LLMI…SSLV), 121–141 (WGLA…EPLL), 152–172 (EIVI…PRSI), 370–390 (LFWL…IAVV), 407–427 (FIYG…VIIP), 431–451 (QSML…GIEV), 459–479 (MGAL…TFHF), and 482–502 (FLDS…VILL).

This sequence belongs to the aromatic acid exporter ArAE (TC 2.A.85) family.

It localises to the cell inner membrane. In terms of biological role, forms an efflux pump with AaeA. Could function as a metabolic relief valve, allowing to eliminate certain compounds when they accumulate to high levels in the cell. This chain is p-hydroxybenzoic acid efflux pump subunit AaeB, found in Shigella sonnei (strain Ss046).